The sequence spans 194 residues: Mitochondrial import inner membrane translocase subunit Tim22 (194 aa).

2 disulfides stabilise this stretch: Cys69-Cys141 and Cys160-Cys179. 3 helical membrane passes run 74-94 (ALAC…TAGI), 123-143 (MSYA…ECLI), and 170-190 (AGLK…AAID).

It belongs to the Tim17/Tim22/Tim23 family. In terms of assembly, component of the TIM22 complex, whose core is composed of TIMM22, associated with peripheral protein FXC1/TIMM10B and the 70 kDa heterohexamer. In most cases, the 70 kDa complex is composed of TIMM9 and TIMM10 (TIMM10A or TIMM10B). A small fraction of the 70 kDa complex is composed of TIMM8 (TIMM8A/DDP1 or TIMM8B/DDP2) and TIMM13. The TIM22 complex also contains AGK and TIMM29. Interacts directly with TIMM9, TIMM10A and FXC1/TIMM10B. Interacts (when oxidized) with TIMM29; interaction is direct. In terms of processing, disulfide bonds promote efficient assembly of the TIM22 complex.

The protein resides in the mitochondrion inner membrane. Its function is as follows. Essential core component of the TIM22 complex, a complex that mediates the import and insertion of multi-pass transmembrane proteins into the mitochondrial inner membrane. In the TIM22 complex, it constitutes the voltage-activated and signal-gated channel. Forms a twin-pore translocase that uses the membrane potential as external driving force in 2 voltage-dependent steps. The polypeptide is Mitochondrial import inner membrane translocase subunit Tim22 (TIMM22) (Homo sapiens (Human)).